The following is a 265-amino-acid chain: Ribosomal RNA small subunit methyltransferase A (265 aa).

H11, L13, G38, E59, D83, and N100 together coordinate S-adenosyl-L-methionine.

Belongs to the class I-like SAM-binding methyltransferase superfamily. rRNA adenine N(6)-methyltransferase family. RsmA subfamily.

It localises to the cytoplasm. The enzyme catalyses adenosine(1518)/adenosine(1519) in 16S rRNA + 4 S-adenosyl-L-methionine = N(6)-dimethyladenosine(1518)/N(6)-dimethyladenosine(1519) in 16S rRNA + 4 S-adenosyl-L-homocysteine + 4 H(+). Functionally, specifically dimethylates two adjacent adenosines (A1518 and A1519) in the loop of a conserved hairpin near the 3'-end of 16S rRNA in the 30S particle. May play a critical role in biogenesis of 30S subunits. The polypeptide is Ribosomal RNA small subunit methyltransferase A (Thermosynechococcus vestitus (strain NIES-2133 / IAM M-273 / BP-1)).